Here is a 184-residue protein sequence, read N- to C-terminus: ATP synthase subunit b, chloroplastic (184 aa).

A helical transmembrane segment spans residues leucine 27–leucine 49.

The protein belongs to the ATPase B chain family. As to quaternary structure, F-type ATPases have 2 components, F(1) - the catalytic core - and F(0) - the membrane proton channel. F(1) has five subunits: alpha(3), beta(3), gamma(1), delta(1), epsilon(1). F(0) has four main subunits: a(1), b(1), b'(1) and c(10-14). The alpha and beta chains form an alternating ring which encloses part of the gamma chain. F(1) is attached to F(0) by a central stalk formed by the gamma and epsilon chains, while a peripheral stalk is formed by the delta, b and b' chains.

The protein localises to the plastid. The protein resides in the chloroplast thylakoid membrane. F(1)F(0) ATP synthase produces ATP from ADP in the presence of a proton or sodium gradient. F-type ATPases consist of two structural domains, F(1) containing the extramembraneous catalytic core and F(0) containing the membrane proton channel, linked together by a central stalk and a peripheral stalk. During catalysis, ATP synthesis in the catalytic domain of F(1) is coupled via a rotary mechanism of the central stalk subunits to proton translocation. Its function is as follows. Component of the F(0) channel, it forms part of the peripheral stalk, linking F(1) to F(0). This is ATP synthase subunit b, chloroplastic from Buxus microphylla (Littleleaf boxwood).